A 387-amino-acid chain; its full sequence is Succinate--CoA ligase [ADP-forming] subunit beta (387 aa).

The ATP-grasp domain occupies 9–244; that stretch reads KHILSKFGVN…YDEEIKEEIE (236 aa). ATP is bound by residues Lys46, 53–55, Glu99, Cys102, and Glu107; that span reads GRG. Positions 199 and 213 each coordinate Mg(2+). Substrate contacts are provided by residues Asn264 and 321-323; that span reads GIM.

The protein belongs to the succinate/malate CoA ligase beta subunit family. As to quaternary structure, heterotetramer of two alpha and two beta subunits. Mg(2+) serves as cofactor.

It carries out the reaction succinate + ATP + CoA = succinyl-CoA + ADP + phosphate. The catalysed reaction is GTP + succinate + CoA = succinyl-CoA + GDP + phosphate. Its pathway is carbohydrate metabolism; tricarboxylic acid cycle; succinate from succinyl-CoA (ligase route): step 1/1. Its function is as follows. Succinyl-CoA synthetase functions in the citric acid cycle (TCA), coupling the hydrolysis of succinyl-CoA to the synthesis of either ATP or GTP and thus represents the only step of substrate-level phosphorylation in the TCA. The beta subunit provides nucleotide specificity of the enzyme and binds the substrate succinate, while the binding sites for coenzyme A and phosphate are found in the alpha subunit. This chain is Succinate--CoA ligase [ADP-forming] subunit beta, found in Ehrlichia chaffeensis (strain ATCC CRL-10679 / Arkansas).